The following is a 227-amino-acid chain: Class I hydrophobin A (227 aa).

A signal peptide spans 1 to 18 (MQFSLSAIVLGLAATVYA). Asn50 is a glycosylation site (N-linked (GlcNAc...) asparagine). 3 cysteine pairs are disulfide-bonded: Cys60–Cys138, Cys68–Cys132, and Cys69–Cys109.

The protein belongs to the fungal hydrophobin family.

Its subcellular location is the secreted. The protein resides in the cell wall. Aerial growth, conidiation, and dispersal of filamentous fungi in the environment rely upon a capability of their secreting small amphipathic proteins called hydrophobins (HPBs) with low sequence identity. Class I can self-assemble into an outermost layer of rodlet bundles on aerial cell surfaces, conferring cellular hydrophobicity that supports fungal growth, development and dispersal; whereas Class II form highly ordered films at water-air interfaces through intermolecular interactions but contribute nothing to the rodlet structure. In P.expansum, hydrophobins contribute to germination, tolerance to cold stress and mycotoxins patulin and citrinin production. HfbA and HfbB are essential for fungal surface hydrophobicity and HfbA mediates air and water dispersal. This chain is Class I hydrophobin A, found in Penicillium expansum (Blue mold rot fungus).